A 292-amino-acid polypeptide reads, in one-letter code: UPF0696 protein C11orf68 homolog (292 aa).

A compositionally biased stretch (low complexity) spans 1-10; sequence MAAAAAAVAG. Positions 1–60 are disordered; the sequence is MAAAAAAVAGAGRGGGGGADPGQERSRARSWVGAERSEGRRMEPNEELEEEDSPGGREDG. Residues 11–20 are compositionally biased toward gly residues; it reads AGRGGGGGAD. A compositionally biased stretch (basic and acidic residues) spans 35–44; that stretch reads ERSEGRRMEP.

The protein belongs to the UPF0696 family.

This is UPF0696 protein C11orf68 homolog (Bles03) from Rattus norvegicus (Rat).